The following is a 539-amino-acid chain: Putative dimethylaniline monooxygenase [N-oxide-forming] 6 (539 aa).

Residues 9-13 (GAGVS), glutamate 32, 40-41 (LW), and 61-62 (NS) contribute to the FAD site. Residue 195–198 (SGSD) participates in NADP(+) binding. Residues 518–538 (FYNLLKMLSFPLLLLAVTLTF) form a helical membrane-spanning segment.

It belongs to the FMO family. It depends on FAD as a cofactor.

It is found in the microsome membrane. It localises to the endoplasmic reticulum membrane. It carries out the reaction N,N-dimethylaniline + NADPH + O2 + H(+) = N,N-dimethylaniline N-oxide + NADP(+) + H2O. Functionally, it is probable that this protein is only produced in very small quantity or not at all as the gene coding for it seems to be unable to produce full-length transcripts. The sequence is that of Putative dimethylaniline monooxygenase [N-oxide-forming] 6 (FMO6P) from Homo sapiens (Human).